Consider the following 777-residue polypeptide: C6 finger domain transcription factor adaR (777 aa).

Residues 1 to 20 (MEQRSSPARSLPPRKTTTTP) are disordered. Residues 24–50 (CELCRKRKVKCDKLTPCTNCAASGTVC) constitute a DNA-binding region (zn(2)-C6 fungal-type). Disordered regions lie at residues 61 to 85 (GRHA…TDRI), 111 to 144 (NSHS…NPNT), 182 to 213 (SSLA…VLGL), 419 to 440 (PQHI…PNRE), 468 to 496 (RKVD…DPSW), and 655 to 699 (LPPS…PTGS). Low complexity predominate over residues 475 to 489 (PTPTSSTSGTSTSRS). Pro residues predominate over residues 668–677 (ATPPTFPGVP).

The protein localises to the nucleus. In terms of biological role, transcription factor that specifically regulates the expression of the ada gene cluster involved in the biosynthesis of the linear tetracyclic TAN-1612 neuropeptide Y receptor antagonist. The protein is C6 finger domain transcription factor adaR of Aspergillus niger (strain ATCC MYA-4892 / CBS 513.88 / FGSC A1513).